The chain runs to 150 residues: Cytochrome c-type biogenesis protein CcmE (150 aa).

Residues 1 to 7 (MTRKQKR) are Cytoplasmic-facing. A helical; Signal-anchor for type II membrane protein transmembrane segment spans residues 8 to 28 (LAIIGGGVGFLTAAVLLVMFA). Residues 29–150 (FSQAVAYFYV…VTLGGEENIR (122 aa)) lie on the Periplasmic side of the membrane. 2 residues coordinate heme: His-123 and Tyr-127.

Belongs to the CcmE/CycJ family.

Its subcellular location is the cell inner membrane. Functionally, heme chaperone required for the biogenesis of c-type cytochromes. Transiently binds heme delivered by CcmC and transfers the heme to apo-cytochromes in a process facilitated by CcmF and CcmH. The chain is Cytochrome c-type biogenesis protein CcmE from Sinorhizobium medicae (strain WSM419) (Ensifer medicae).